A 260-amino-acid chain; its full sequence is Ribosome maturation factor RimP (260 aa).

Basic and acidic residues-rich tracts occupy residues 189-199 (RRGRDAEREQL) and 215-227 (AREM…PRKE). A disordered region spans residues 189–260 (RRGRDAEREQ…QTTSDPHQGE (72 aa)). Residues 228–242 (KTAKKPLPKNTKAHR) are compositionally biased toward basic residues.

The protein belongs to the RimP family.

The protein resides in the cytoplasm. Its function is as follows. Required for maturation of 30S ribosomal subunits. The polypeptide is Ribosome maturation factor RimP (Afipia carboxidovorans (strain ATCC 49405 / DSM 1227 / KCTC 32145 / OM5) (Oligotropha carboxidovorans)).